Consider the following 481-residue polypeptide: MKPNIVLIMVDQMRGDCLGVNGNEFIETPNLDMMATEGYNFENAYTAVPSCIASRASILTGMSQKSHGRVGYEDGVSWNYENTIASEFSKAGYHTQCIGKMHVYPERNLCGFHNIMLHDGYLHFARNKEGKASTQIEQCDDYLKWFREKKGHNVDLIDIGLDCNSWVSRPWGYEENLHPTNWVVNESIDFLRRRDPSKPFFLKMSFVRPHSPLDPPKFYFDMYKDEDLPEPLMGDWANKEDEENRGKDINCVKGIINKKALKRAKAAYYGSITHIDHQIGRFLIALSEYGKLNNTIFLFVSDHGDMMGDHNWFRKGIPYEGSARVPFFIYDPGNLLKGKKGKVFDEVLELRDIMPTLLDFAHISIPDSVEGLSLKDLIEERNSTWRDYIHGEHSFGEDSNHYIVTKKDKFLWFSQRGEEQYFDLEKDPKELTNLINSEEYKERIDYLRKILIKELEGREEGYTDGNKLLKGYPVSTLKHIR.

The Ca(2+) site is built by D11, Q12, and C51. C51 serves as the catalytic Nucleophile. C51 is modified (3-oxoalanine (Cys)). H102 is a catalytic residue. Ca(2+) contacts are provided by D302 and H303.

It belongs to the sulfatase family. Ca(2+) serves as cofactor. Post-translationally, the conversion to 3-oxoalanine (also known as C-formylglycine, FGly), of a serine or cysteine residue in prokaryotes and of a cysteine residue in eukaryotes, is critical for catalytic activity.

The enzyme catalyses an aryl sulfate + H2O = a phenol + sulfate + H(+). Has sulfatase activity toward para-nitrophenyl sulfate, which is increased in presence of calcium ion. The sequence is that of Arylsulfatase from Clostridium perfringens (strain 13 / Type A).